We begin with the raw amino-acid sequence, 512 residues long: Cytochrome P450 77A4 (512 aa).

The helical transmembrane segment at 9 to 29 (PTSLDFTFFAIIISGFVFIIT) threads the bilayer. Cysteine 456 serves as a coordination point for heme.

This sequence belongs to the cytochrome P450 family. It depends on heme as a cofactor.

The protein localises to the membrane. Its function is as follows. Catalyzes the epoxidation of physiological unsaturated fatty acids in vitro. Can use laurate, oleate, linoleate, linolenate and vernolate as substrate. The sequence is that of Cytochrome P450 77A4 (CYP77A4) from Arabidopsis thaliana (Mouse-ear cress).